The primary structure comprises 320 residues: Methionyl-tRNA formyltransferase (320 aa).

114–117 is a binding site for (6S)-5,6,7,8-tetrahydrofolate; the sequence is SLLP.

The protein belongs to the Fmt family.

It carries out the reaction L-methionyl-tRNA(fMet) + (6R)-10-formyltetrahydrofolate = N-formyl-L-methionyl-tRNA(fMet) + (6S)-5,6,7,8-tetrahydrofolate + H(+). Its function is as follows. Attaches a formyl group to the free amino group of methionyl-tRNA(fMet). The formyl group appears to play a dual role in the initiator identity of N-formylmethionyl-tRNA by promoting its recognition by IF2 and preventing the misappropriation of this tRNA by the elongation apparatus. In Acinetobacter baumannii (strain AB0057), this protein is Methionyl-tRNA formyltransferase.